A 311-amino-acid chain; its full sequence is Probable deoxyhypusine synthase (311 aa).

Lysine 284 functions as the Nucleophile in the catalytic mechanism.

The protein belongs to the deoxyhypusine synthase family. It depends on NAD(+) as a cofactor.

It catalyses the reaction [eIF5A protein]-L-lysine + spermidine = [eIF5A protein]-deoxyhypusine + propane-1,3-diamine. Its pathway is protein modification; eIF5A hypusination. Its function is as follows. Catalyzes the NAD-dependent oxidative cleavage of spermidine and the subsequent transfer of the butylamine moiety of spermidine to the epsilon-amino group of a specific lysine residue of the eIF-5A precursor protein to form the intermediate deoxyhypusine residue. This Sulfurisphaera tokodaii (strain DSM 16993 / JCM 10545 / NBRC 100140 / 7) (Sulfolobus tokodaii) protein is Probable deoxyhypusine synthase (dys).